A 228-amino-acid polypeptide reads, in one-letter code: Sodium channel regulatory subunit beta-4 (228 aa).

Positions 1–30 (MPGARDQGAARARWLGIGLLGLFLLPVSLS) are cleaved as a signal peptide. Residues 31 to 148 (LEVSVGKATT…NDFQHQATIF (118 aa)) enclose the Ig-like C2-type domain. The Extracellular portion of the chain corresponds to 31 to 162 (LEVSVGKATT…DKLEEVDNTV (132 aa)). N-linked (GlcNAc...) asparagine glycosylation is found at Asn45, Asn71, and Asn113. Residues Cys53 and Cys131 are joined by a disulfide bond. A helical transmembrane segment spans residues 163 to 183 (TLIILGVVGGVIGLLIFILLV). Topologically, residues 184–228 (KKFIAFIIKKTQEKKKECLVSSSGNDNTENGLPGSKAEEKAPTKV) are cytoplasmic. The disordered stretch occupies residues 198–228 (KKECLVSSSGNDNTENGLPGSKAEEKAPTKV). A compositionally biased stretch (polar residues) spans 203 to 213 (VSSSGNDNTEN). The segment covering 219 to 228 (KAEEKAPTKV) has biased composition (basic and acidic residues).

It belongs to the sodium channel auxiliary subunit SCN4B (TC 8.A.17) family. A voltage-gated sodium (Nav) channel consists of an ion-conducting pore-forming alpha subunit functional on its own that is regulated by one or more beta subunits. The beta subunit SCN4B is disulfide-linked to the pore-forming alpha subunit. Interacts with SCN1A; regulatory subunit of SCN1A/Nav1.1. Interacts with SCN2A; regulatory subunit of SCN2A/Nav1.2. Contains an interchain disulfide bond with SCN2A.

It localises to the cell membrane. Regulatory subunit of multiple voltage-gated sodium (Nav) channels directly mediating the depolarization of excitable membranes. Navs, also called VGSCs (voltage-gated sodium channels) or VDSCs (voltage-dependent sodium channels), operate by switching between closed and open conformations depending on the voltage difference across the membrane. In the open conformation they allow Na(+) ions to selectively pass through the pore, along their electrochemical gradient. The influx of Na+ ions provokes membrane depolarization, initiating the propagation of electrical signals throughout cells and tissues. The accessory beta subunits participate in localization and functional modulation of the Nav channels. Modulates the activity of SCN1A/Nav1.1. Modulates the activity of SCN2A/Nav1.2. The protein is Sodium channel regulatory subunit beta-4 of Bos taurus (Bovine).